We begin with the raw amino-acid sequence, 328 residues long: Protoheme IX farnesyltransferase (328 aa).

The next 8 helical transmembrane spans lie at 31–51 (IILLLLITTAAGMWLGAKGEV), 53–73 (LFLLFVTLTGGALASGAANAI), 120–140 (VFANLLAALLAMSGIVFYVGV), 153–173 (IVIGGAAGAIPPLVGWAAVTG), 181–201 (LLFAIIVVWTPPHFWALAIYI), 226–246 (IWVYTLILIPMTLLLVYPLHV), 250–270 (IYAVLATYLGVIFIKKAWQLL), and 285–305 (YSIYYMMLLCLVMVIDSLPFT).

This sequence belongs to the UbiA prenyltransferase family. Protoheme IX farnesyltransferase subfamily.

It localises to the cell inner membrane. It carries out the reaction heme b + (2E,6E)-farnesyl diphosphate + H2O = Fe(II)-heme o + diphosphate. The protein operates within porphyrin-containing compound metabolism; heme O biosynthesis; heme O from protoheme: step 1/1. In terms of biological role, converts heme B (protoheme IX) to heme O by substitution of the vinyl group on carbon 2 of heme B porphyrin ring with a hydroxyethyl farnesyl side group. This is Protoheme IX farnesyltransferase from Trichodesmium erythraeum (strain IMS101).